Consider the following 326-residue polypeptide: Putative replication protein B (326 aa).

This sequence belongs to the ParB family.

The polypeptide is Putative replication protein B (Sinorhizobium fredii (strain NBRC 101917 / NGR234)).